The primary structure comprises 122 residues: MVQQQTILNVADNSGAKKLMVIRVLGGSRKRFGKIGDIVVASVKEAIPGGNVKKGDIVKAVIVRTRKETRRDDGSYIKFDDNAGVVINNNNEPRATRIFGPVARELRARNFMKILSLAIEVI.

The protein belongs to the universal ribosomal protein uL14 family. Part of the 50S ribosomal subunit. Forms a cluster with proteins L3 and L19. In the 70S ribosome, L14 and L19 interact and together make contacts with the 16S rRNA in bridges B5 and B8.

Its function is as follows. Binds to 23S rRNA. Forms part of two intersubunit bridges in the 70S ribosome. This Fusobacterium nucleatum subsp. nucleatum (strain ATCC 25586 / DSM 15643 / BCRC 10681 / CIP 101130 / JCM 8532 / KCTC 2640 / LMG 13131 / VPI 4355) protein is Large ribosomal subunit protein uL14.